The primary structure comprises 213 residues: Orotate phosphoribosyltransferase (213 aa).

K26 is a 5-phospho-alpha-D-ribose 1-diphosphate binding site. An orotate-binding site is contributed by 34–35 (FF). 5-phospho-alpha-D-ribose 1-diphosphate contacts are provided by residues 72 to 73 (YK), R99, K100, K103, H105, and 124 to 132 (DDVITAGTA). Positions 128 and 156 each coordinate orotate.

Belongs to the purine/pyrimidine phosphoribosyltransferase family. PyrE subfamily. As to quaternary structure, homodimer. Mg(2+) is required as a cofactor.

It carries out the reaction orotidine 5'-phosphate + diphosphate = orotate + 5-phospho-alpha-D-ribose 1-diphosphate. Its pathway is pyrimidine metabolism; UMP biosynthesis via de novo pathway; UMP from orotate: step 1/2. In terms of biological role, catalyzes the transfer of a ribosyl phosphate group from 5-phosphoribose 1-diphosphate to orotate, leading to the formation of orotidine monophosphate (OMP). This is Orotate phosphoribosyltransferase from Klebsiella pneumoniae (strain 342).